A 431-amino-acid polypeptide reads, in one-letter code: Adenylosuccinate synthetase (431 aa).

GTP is bound by residues 12-18 (GDEGKGK) and 40-42 (GHT). The Proton acceptor role is filled by Asp-13. Residues Asp-13 and Gly-40 each coordinate Mg(2+). Residues 13–16 (DEGK), 38–41 (NAGH), Thr-129, Arg-143, Gln-224, and Thr-239 contribute to the IMP site. Residue His-41 is the Proton donor of the active site. An Isoglutamyl lysine isopeptide (Lys-Gln) (interchain with Q-Cter in protein Pup) cross-link involves residue Lys-292. 299 to 305 (VTTGRAR) lines the substrate pocket. Position 303 (Arg-303) interacts with IMP. GTP is bound by residues Arg-305, 331–333 (KLD), and 413–415 (GVG).

This sequence belongs to the adenylosuccinate synthetase family. As to quaternary structure, homodimer. It depends on Mg(2+) as a cofactor.

The protein resides in the cytoplasm. The enzyme catalyses IMP + L-aspartate + GTP = N(6)-(1,2-dicarboxyethyl)-AMP + GDP + phosphate + 2 H(+). The protein operates within purine metabolism; AMP biosynthesis via de novo pathway; AMP from IMP: step 1/2. Functionally, plays an important role in the de novo pathway of purine nucleotide biosynthesis. Catalyzes the first committed step in the biosynthesis of AMP from IMP. The protein is Adenylosuccinate synthetase of Mycolicibacterium smegmatis (strain ATCC 700084 / mc(2)155) (Mycobacterium smegmatis).